The sequence spans 573 residues: ESX-1 secretion system protein EccA1 (573 aa).

334 to 341 (GPPGTGKT) provides a ligand contact to ATP.

The protein belongs to the CbxX/CfxQ family. In terms of assembly, part of the ESX-1 / type VII secretion system (T7SS), which is composed of cytosolic and membrane components.

The protein resides in the cytoplasm. Its function is as follows. Part of the ESX-1 / type VII specialized secretion system (T7SS), which exports several proteins including EsxA and EsxB. EccA1 exhibits ATPase activity and may provide energy for the export of ESX-1 substrates. This chain is ESX-1 secretion system protein EccA1, found in Mycobacterium leprae (strain TN).